A 315-amino-acid polypeptide reads, in one-letter code: Putative carboxypeptidase RC0549 (315 aa).

The active-site Nucleophile is the serine 125. Catalysis depends on charge relay system residues glutamate 225 and histidine 288.

This sequence belongs to the peptidase S66 family.

This chain is Putative carboxypeptidase RC0549, found in Rickettsia conorii (strain ATCC VR-613 / Malish 7).